The chain runs to 138 residues: Basic phospholipase A2 PL-Y (138 aa).

Positions methionine 1–glycine 16 are cleaved as a signal peptide. Intrachain disulfides connect cysteine 42–cysteine 131, cysteine 44–cysteine 60, cysteine 59–cysteine 111, cysteine 65–cysteine 138, cysteine 66–cysteine 104, cysteine 73–cysteine 97, and cysteine 91–cysteine 102. Ca(2+)-binding residues include tyrosine 43, glycine 45, and glycine 47. Residue histidine 63 is part of the active site. Aspartate 64 lines the Ca(2+) pocket. The active site involves aspartate 105.

Belongs to the phospholipase A2 family. Group II subfamily. D49 sub-subfamily. The cofactor is Ca(2+). Expressed by the venom gland.

Its subcellular location is the secreted. It carries out the reaction a 1,2-diacyl-sn-glycero-3-phosphocholine + H2O = a 1-acyl-sn-glycero-3-phosphocholine + a fatty acid + H(+). Its function is as follows. Snake venom phospholipase A2 (PLA2) that can cleave arachidonate at the sn-2 position from phospholipides in the micellar state or in bilayer membranes. PLA2 catalyzes the calcium-dependent hydrolysis of the 2-acyl groups in 3-sn-phosphoglycerides. The protein is Basic phospholipase A2 PL-Y of Protobothrops flavoviridis (Habu).